A 421-amino-acid polypeptide reads, in one-letter code: Medium-chain specific acyl-CoA dehydrogenase, mitochondrial (421 aa).

Residues 1 to 25 constitute a mitochondrion transit peptide; sequence MAAGFGRCCRVLRSISRFHWRSQHT. At Lys69 the chain carries N6-acetyllysine; alternate. At Lys69 the chain carries N6-succinyllysine; alternate. 158–167 is a binding site for FAD; sequence YCVTEPGAGS. Residue Ser167 participates in octanoyl-CoA binding. Lys179 carries the post-translational modification N6-succinyllysine. 191–193 contacts FAD; sequence WIT. N6-acetyllysine; alternate is present on residues Lys212, Lys217, Lys259, and Lys271. 4 positions are modified to N6-succinyllysine; alternate: Lys212, Lys217, Lys259, and Lys271. Residue Asp278 coordinates octanoyl-CoA. An N6-acetyllysine modification is found at Lys279. Arg281 is a binding site for octanoyl-CoA. Lys301 bears the N6-acetyllysine mark. Residues 306–308 and 316–317 each bind FAD; these read RKT and HQ. Thr351 carries the phosphothreonine modification. Residues 374 to 378 and 401 to 405 contribute to the FAD site; these read QILGG and EGTSQ. Glu401 is a binding site for octanoyl-CoA. Glu401 functions as the Proton acceptor in the catalytic mechanism.

It belongs to the acyl-CoA dehydrogenase family. As to quaternary structure, homotetramer. Interacts with the heterodimeric electron transfer flavoprotein ETF. The cofactor is FAD. Acetylated. Could occur at proximity of the cofactor-binding sites and reduce the catalytic activity. Could be deacetylated by SIRT3.

The protein resides in the mitochondrion matrix. It catalyses the reaction a medium-chain 2,3-saturated fatty acyl-CoA + oxidized [electron-transfer flavoprotein] + H(+) = a medium-chain (2E)-enoyl-CoA + reduced [electron-transfer flavoprotein]. The catalysed reaction is pentanoyl-CoA + oxidized [electron-transfer flavoprotein] + H(+) = (2E)-pentenoyl-CoA + reduced [electron-transfer flavoprotein]. The enzyme catalyses hexanoyl-CoA + oxidized [electron-transfer flavoprotein] + H(+) = (2E)-hexenoyl-CoA + reduced [electron-transfer flavoprotein]. It carries out the reaction octanoyl-CoA + oxidized [electron-transfer flavoprotein] + H(+) = (2E)-octenoyl-CoA + reduced [electron-transfer flavoprotein]. It catalyses the reaction decanoyl-CoA + oxidized [electron-transfer flavoprotein] + H(+) = (2E)-decenoyl-CoA + reduced [electron-transfer flavoprotein]. The catalysed reaction is dodecanoyl-CoA + oxidized [electron-transfer flavoprotein] + H(+) = (2E)-dodecenoyl-CoA + reduced [electron-transfer flavoprotein]. The enzyme catalyses tetradecanoyl-CoA + oxidized [electron-transfer flavoprotein] + H(+) = (2E)-tetradecenoyl-CoA + reduced [electron-transfer flavoprotein]. It carries out the reaction oxidized [electron-transfer flavoprotein] + hexadecanoyl-CoA + H(+) = (2E)-hexadecenoyl-CoA + reduced [electron-transfer flavoprotein]. Its pathway is lipid metabolism; mitochondrial fatty acid beta-oxidation. Medium-chain specific acyl-CoA dehydrogenase is one of the acyl-CoA dehydrogenases that catalyze the first step of mitochondrial fatty acid beta-oxidation, an aerobic process breaking down fatty acids into acetyl-CoA and allowing the production of energy from fats. The first step of fatty acid beta-oxidation consists in the removal of one hydrogen from C-2 and C-3 of the straight-chain fatty acyl-CoA thioester, resulting in the formation of trans-2-enoyl-CoA. Electron transfer flavoprotein (ETF) is the electron acceptor that transfers electrons to the main mitochondrial respiratory chain via ETF-ubiquinone oxidoreductase (ETF dehydrogenase). Among the different mitochondrial acyl-CoA dehydrogenases, medium-chain specific acyl-CoA dehydrogenase acts specifically on acyl-CoAs with saturated 6 to 12 carbons long primary chains. The polypeptide is Medium-chain specific acyl-CoA dehydrogenase, mitochondrial (Homo sapiens (Human)).